Consider the following 510-residue polypeptide: AAA-ATPase At3g28540 (510 aa).

A helical membrane pass occupies residues 7–25 (LFGFTGTTMASLMFFWSVY). 246 to 253 (GPPGTGKS) lines the ATP pocket. The disordered stretch occupies residues 460–510 (KEKAKKLAEEEKMKKAARDARRIKKKAEEEHKKKNKVEENGDVSHDNGNHI).

Belongs to the AAA ATPase family. BCS1 subfamily. Requires Mg(2+) as cofactor.

It localises to the membrane. It carries out the reaction ATP + H2O = ADP + phosphate + H(+). This Arabidopsis thaliana (Mouse-ear cress) protein is AAA-ATPase At3g28540.